Reading from the N-terminus, the 457-residue chain is tRNA-2-methylthio-N(6)-dimethylallyladenosine synthase (457 aa).

One can recognise an MTTase N-terminal domain in the interval 3 to 120 (KKVYVKTFGC…LPQMIDARRE (118 aa)). The [4Fe-4S] cluster site is built by Cys12, Cys49, Cys83, Cys157, Cys161, and Cys164. Residues 143-377 (RVEGPSAFVS…QATIEENVAR (235 aa)) enclose the Radical SAM core domain. The 68-residue stretch at 380 to 447 (QSMLGKVERI…PHSLRGELVL (68 aa)) folds into the TRAM domain.

The protein belongs to the methylthiotransferase family. MiaB subfamily. As to quaternary structure, monomer. It depends on [4Fe-4S] cluster as a cofactor.

Its subcellular location is the cytoplasm. It carries out the reaction N(6)-dimethylallyladenosine(37) in tRNA + (sulfur carrier)-SH + AH2 + 2 S-adenosyl-L-methionine = 2-methylsulfanyl-N(6)-dimethylallyladenosine(37) in tRNA + (sulfur carrier)-H + 5'-deoxyadenosine + L-methionine + A + S-adenosyl-L-homocysteine + 2 H(+). Catalyzes the methylthiolation of N6-(dimethylallyl)adenosine (i(6)A), leading to the formation of 2-methylthio-N6-(dimethylallyl)adenosine (ms(2)i(6)A) at position 37 in tRNAs that read codons beginning with uridine. This is tRNA-2-methylthio-N(6)-dimethylallyladenosine synthase from Burkholderia thailandensis (strain ATCC 700388 / DSM 13276 / CCUG 48851 / CIP 106301 / E264).